An 88-amino-acid chain; its full sequence is Small ribosomal subunit protein bS20 (88 aa).

The tract at residues 1–20 (MPNIKSAIKRTKTNNERRAH) is disordered.

The protein belongs to the bacterial ribosomal protein bS20 family.

In terms of biological role, binds directly to 16S ribosomal RNA. The chain is Small ribosomal subunit protein bS20 from Bacillus velezensis (strain DSM 23117 / BGSC 10A6 / LMG 26770 / FZB42) (Bacillus amyloliquefaciens subsp. plantarum).